The chain runs to 789 residues: UPF0313 protein VC_1711 (789 aa).

One can recognise a Radical SAM core domain in the interval 363 to 642 (AYDMIKTSVN…KALLRYHDPA (280 aa)). Residues C377, C381, and C384 each contribute to the [4Fe-4S] cluster site. Residues 669-789 (PEKDSDLVTP…NTQRQPQRAR (121 aa)) form a disordered region. Residues 683 to 698 (KSGRHGANRFATKHTH) show a composition bias toward basic residues. Polar residues-rich tracts occupy residues 716-726 (RPNSGNKSNQG), 733-763 (PTGSKPTANKPAGNQSARSEQNRGQQGQRGS), and 778-789 (RGNTQRQPQRAR).

It belongs to the UPF0313 family. The cofactor is [4Fe-4S] cluster.

In Vibrio cholerae serotype O1 (strain ATCC 39315 / El Tor Inaba N16961), this protein is UPF0313 protein VC_1711.